The following is a 249-amino-acid chain: 2,3-bisphosphoglycerate-dependent phosphoglycerate mutase (249 aa).

Substrate-binding positions include 9-16 (RHGQSQWN), 22-23 (TG), Arg61, 88-91 (ERHY), Lys99, 115-116 (RR), and 184-185 (GN). The active-site Tele-phosphohistidine intermediate is the His10. Glu88 functions as the Proton donor/acceptor in the catalytic mechanism.

Belongs to the phosphoglycerate mutase family. BPG-dependent PGAM subfamily. Homodimer.

The catalysed reaction is (2R)-2-phosphoglycerate = (2R)-3-phosphoglycerate. Its pathway is carbohydrate degradation; glycolysis; pyruvate from D-glyceraldehyde 3-phosphate: step 3/5. Functionally, catalyzes the interconversion of 2-phosphoglycerate and 3-phosphoglycerate. In Xylella fastidiosa (strain M12), this protein is 2,3-bisphosphoglycerate-dependent phosphoglycerate mutase.